Reading from the N-terminus, the 274-residue chain is MALQKCKPTSAGRRHLVKVVNSDLHKGKPYAPLLEKNSKSGGRNNNGRITVRHIGGGHKQHYRLIDFKRTKDGIPATVERLEYDPNRSANIALVLYADGERRYIIAPKGLKAGDAIQSGVDAPIKPGNALPMRNMPVGSTVHNVELKPGKGAQIARSAGAYVQILARDGQYVTLRLRSGEVRKVEADCRATLGEVGNAEHMLRSLGKAGANRWRGIRPTVRGVAMNPVDHPHGGGEGRTSGGRHPVSPWGKPTKGAKTRKNKRTDKFIVRRRTK.

Disordered stretches follow at residues 28-53 (KPYAPLLEKNSKSGGRNNNGRITVRH) and 223-274 (VAMN…RRTK). The span at 39-48 (KSGGRNNNGR) shows a compositional bias: low complexity. Residues 254-274 (KGAKTRKNKRTDKFIVRRRTK) are compositionally biased toward basic residues.

It belongs to the universal ribosomal protein uL2 family. In terms of assembly, part of the 50S ribosomal subunit. Forms a bridge to the 30S subunit in the 70S ribosome.

In terms of biological role, one of the primary rRNA binding proteins. Required for association of the 30S and 50S subunits to form the 70S ribosome, for tRNA binding and peptide bond formation. It has been suggested to have peptidyltransferase activity; this is somewhat controversial. Makes several contacts with the 16S rRNA in the 70S ribosome. This is Large ribosomal subunit protein uL2 from Pseudoalteromonas translucida (strain TAC 125).